Consider the following 186-residue polypeptide: Peptidyl-tRNA hydrolase (186 aa).

Y14 is a tRNA binding site. H19 functions as the Proton acceptor in the catalytic mechanism. TRNA is bound by residues Y61, N63, and N107.

It belongs to the PTH family. Monomer.

The protein resides in the cytoplasm. It carries out the reaction an N-acyl-L-alpha-aminoacyl-tRNA + H2O = an N-acyl-L-amino acid + a tRNA + H(+). Its function is as follows. Hydrolyzes ribosome-free peptidyl-tRNAs (with 1 or more amino acids incorporated), which drop off the ribosome during protein synthesis, or as a result of ribosome stalling. Catalyzes the release of premature peptidyl moieties from peptidyl-tRNA molecules trapped in stalled 50S ribosomal subunits, and thus maintains levels of free tRNAs and 50S ribosomes. The chain is Peptidyl-tRNA hydrolase from Helicobacter pylori (strain G27).